Here is a 323-residue protein sequence, read N- to C-terminus: Sphingolipid delta(4)-desaturase/C4-monooxygenase DES2 (323 aa).

Residue Gly2 is the site of N-myristoyl glycine attachment. The next 2 membrane-spanning stretches (helical) occupy residues 41–61 and 68–88; these read PNIK…CWLV and WLLF…TLAI. Positions 89-93 match the Histidine box-1 motif; that stretch reads HDISH. The required for C4-hydroxylase activity stretch occupies residues 95–99; it reads TAFGT. The short motif at 128-132 is the Histidine box-2 element; the sequence is HVDHH. A helical membrane pass occupies residues 200–220; the sequence is IFALWGIKAIVYLLASSLLGL. Residues 259–263 carry the Histidine box-3 motif; it reads HVEHH.

It belongs to the fatty acid desaturase type 1 family. DEGS subfamily.

Its subcellular location is the endoplasmic reticulum membrane. It catalyses the reaction a dihydroceramide + 2 Fe(II)-[cytochrome b5] + O2 + 2 H(+) = a phytoceramide + 2 Fe(III)-[cytochrome b5] + H2O. It carries out the reaction an N-acylsphinganine + 2 Fe(II)-[cytochrome b5] + O2 + 2 H(+) = an N-acylsphing-4-enine + 2 Fe(III)-[cytochrome b5] + 2 H2O. The enzyme catalyses N-octanoylsphinganine + 2 Fe(II)-[cytochrome b5] + O2 + 2 H(+) = N-octanoyl-4-hydroxysphinganine + 2 Fe(III)-[cytochrome b5] + H2O. The catalysed reaction is an N-acylsphinganine + 2 Fe(II)-[cytochrome b5] + O2 + 2 H(+) = an N-acyl-(4R)-4-hydroxysphinganine + 2 Fe(III)-[cytochrome b5] + H2O. Its pathway is membrane lipid metabolism; sphingolipid biosynthesis. In terms of biological role, bifunctional enzyme which acts both as a sphingolipid delta(4)-desaturase and a sphingolipid C4-monooxygenase. The protein is Sphingolipid delta(4)-desaturase/C4-monooxygenase DES2 of Rattus norvegicus (Rat).